The primary structure comprises 159 residues: Urease accessory protein UreE (159 aa).

Positions 140–159 (GAYHGTGHHHHGHGHDPHHG) are disordered.

It belongs to the UreE family.

The protein resides in the cytoplasm. Involved in urease metallocenter assembly. Binds nickel. Probably functions as a nickel donor during metallocenter assembly. The protein is Urease accessory protein UreE of Sinorhizobium fredii (strain NBRC 101917 / NGR234).